The primary structure comprises 536 residues: Lysosomal acid glucosylceramidase (536 aa).

The signal sequence occupies residues 1-39; it reads MEFSSPSREECPKPLSRVSIMAGSLTGLLLLQAVSWASG. Intrachain disulfides connect C43/C55 and C57/C62. 3 N-linked (GlcNAc...) asparagine glycosylation sites follow: N58, N98, and N185. Residue E274 is the Proton donor of the active site. An N-linked (GlcNAc...) asparagine glycan is attached at N309. The active-site Nucleophile is the E379. Residue N501 is glycosylated (N-linked (GlcNAc...) asparagine).

This sequence belongs to the glycosyl hydrolase 30 family. Interacts with saposin-C. Interacts with SCARB2. Interacts with TCP1. May interacts with SNCA; this interaction may inhibit the glucosylceramidase activity. Interacts with GRN; this interaction prevents aggregation of GBA1-SCARB2 complex via interaction with HSPA1A upon stress.

It localises to the lysosome membrane. The enzyme catalyses a beta-D-glucosyl-(1&lt;-&gt;1')-N-acylsphing-4-enine + H2O = an N-acylsphing-4-enine + D-glucose. The catalysed reaction is a beta-D-galactosyl-(1&lt;-&gt;1')-N-acylsphing-4-enine + H2O = an N-acylsphing-4-enine + D-galactose. It catalyses the reaction cholesteryl 3-beta-D-glucoside + H2O = cholesterol + D-glucose. It carries out the reaction a beta-D-glucosyl-(1&lt;-&gt;1')-N-acylsphing-4-enine + cholesterol = cholesteryl 3-beta-D-glucoside + an N-acylsphing-4-enine. The enzyme catalyses beta-D-glucosyl-N-(9Z-octadecenoyl)-sphing-4E-enine + cholesterol = N-(9Z-octadecenoyl)-sphing-4-enine + cholesteryl 3-beta-D-glucoside. The catalysed reaction is beta-D-glucosyl-(1&lt;-&gt;1')-N-hexadecanoylsphing-4-enine + cholesterol = cholesteryl 3-beta-D-glucoside + N-hexadecanoylsphing-4-enine. It catalyses the reaction beta-D-glucosyl-N-octanoylsphing-4E-enine + cholesterol = N-octanoylsphing-4-enine + cholesteryl 3-beta-D-glucoside. It carries out the reaction beta-D-glucosyl-N-dodecanoylsphing-4-enine + cholesterol = N-dodecanoylsphing-4-enine + cholesteryl 3-beta-D-glucoside. The enzyme catalyses beta-D-glucosyl-(1&lt;-&gt;1)-N-octadecanoylsphing-4-enine + cholesterol = N-octadecanoylsphing-4-enine + cholesteryl 3-beta-D-glucoside. The catalysed reaction is beta-D-glucosyl-(1&lt;-&gt;1')-N-(15Z-tetracosenoyl)-sphing-4-enine + cholesterol = N-(15Z-tetracosenoyl)-sphing-4-enine + cholesteryl 3-beta-D-glucoside. It catalyses the reaction a beta-D-galactosyl-(1&lt;-&gt;1')-N-acylsphing-4-enine + cholesterol = cholesteryl 3-beta-D-galactoside + an N-acylsphing-4-enine. It carries out the reaction 1-(beta-D-galactosyl)-N-dodecanoylsphing-4-enine + cholesterol = cholesteryl 3-beta-D-galactoside + N-dodecanoylsphing-4-enine. The enzyme catalyses a beta-D-xylosyl-(1&lt;-&gt;1')-N-acylsphing-4-enine + cholesterol = cholesteryl 3-beta-D-xyloside + an N-acylsphing-4-enine. The catalysed reaction is beta-D-xylosyl-(1&lt;-&gt;1')-N-(9Z-octadecenoyl)-sphing-4-enine + cholesterol = cholesteryl 3-beta-D-xyloside + N-(9Z-octadecenoyl)-sphing-4-enine. Its pathway is steroid metabolism; cholesterol metabolism. It functions in the pathway sphingolipid metabolism. With respect to regulation, synergistically activated by saposin-A and saposin-C, two saposin peptides produced by proteolytic processing of prosaposin/PSAP. Saposin-C activates GBA1 through its recruitment to membranes. The membrane structure and composition in anionic phospholipids are also important for the activation. Activated by PKC in the salvage pathway of ceramide formation. Inhibited by conduritol B epoxide/CBE. Its function is as follows. Glucosylceramidase that catalyzes, within the lysosomal compartment, the hydrolysis of glucosylceramides/GlcCers (such as beta-D-glucosyl-(1&lt;-&gt;1')-N-acylsphing-4-enine) into free ceramides (such as N-acylsphing-4-enine) and glucose. Plays a central role in the degradation of complex lipids and the turnover of cellular membranes. Through the production of ceramides, participates in the PKC-activated salvage pathway of ceramide formation. Catalyzes the glucosylation of cholesterol, through a transglucosylation reaction where glucose is transferred from GlcCer to cholesterol. GlcCer containing mono-unsaturated fatty acids (such as beta-D-glucosyl-N-(9Z-octadecenoyl)-sphing-4-enine) are preferred as glucose donors for cholesterol glucosylation when compared with GlcCer containing same chain length of saturated fatty acids (such as beta-D-glucosyl-N-octadecanoyl-sphing-4-enine). Under specific conditions, may alternatively catalyze the reverse reaction, transferring glucose from cholesteryl 3-beta-D-glucoside to ceramide. Can also hydrolyze cholesteryl 3-beta-D-glucoside producing glucose and cholesterol. Catalyzes the hydrolysis of galactosylceramides/GalCers (such as beta-D-galactosyl-(1&lt;-&gt;1')-N-acylsphing-4-enine), as well as the transfer of galactose between GalCers and cholesterol in vitro, but with lower activity than with GlcCers. Contrary to GlcCer and GalCer, xylosylceramide/XylCer (such as beta-D-xyosyl-(1&lt;-&gt;1')-N-acylsphing-4-enine) is not a good substrate for hydrolysis, however it is a good xylose donor for transxylosylation activity to form cholesteryl 3-beta-D-xyloside. The polypeptide is Lysosomal acid glucosylceramidase (Homo sapiens (Human)).